The primary structure comprises 523 residues: Anthranilate synthase component 1 (523 aa).

L-tryptophan is bound by residues S45 and 296–298 (PYM). 333-334 (GT) is a binding site for chorismate. E366 is a Mg(2+) binding site. Chorismate-binding positions include Y454, R474, 488 to 490 (GAG), and G490. E503 is a Mg(2+) binding site.

It belongs to the anthranilate synthase component I family. In terms of assembly, heterotetramer consisting of two non-identical subunits: a beta subunit (TrpG) and a large alpha subunit (TrpE). Requires Mg(2+) as cofactor.

It catalyses the reaction chorismate + L-glutamine = anthranilate + pyruvate + L-glutamate + H(+). It functions in the pathway amino-acid biosynthesis; L-tryptophan biosynthesis; L-tryptophan from chorismate: step 1/5. Its activity is regulated as follows. Feedback inhibited by tryptophan. In terms of biological role, part of a heterotetrameric complex that catalyzes the two-step biosynthesis of anthranilate, an intermediate in the biosynthesis of L-tryptophan. In the first step, the glutamine-binding beta subunit (TrpG) of anthranilate synthase (AS) provides the glutamine amidotransferase activity which generates ammonia as a substrate that, along with chorismate, is used in the second step, catalyzed by the large alpha subunit of AS (TrpE) to produce anthranilate. In the absence of TrpG, TrpE can synthesize anthranilate directly from chorismate and high concentrations of ammonia. The polypeptide is Anthranilate synthase component 1 (trpE) (Vibrio cholerae serotype O1 (strain ATCC 39315 / El Tor Inaba N16961)).